The chain runs to 605 residues: Tyrosyl-DNA phosphodiesterase 1 (605 aa).

The short motif at 81-86 is the Nuclear localization signal element; the sequence is RKKVKP. His236 serves as the catalytic Nucleophile. A substrate-binding site is contributed by Lys238. The interval 379–382 is interaction with DNA; it reads SLGS. Catalysis depends on His466, which acts as the Proton donor/acceptor. Residue Lys468 participates in substrate binding.

Belongs to the tyrosyl-DNA phosphodiesterase family. As to expression, ubiquitous, with a low level in roots.

Its subcellular location is the nucleus. Its activity is regulated as follows. Inhibited by vanadate analogs. Its function is as follows. DNA repair enzyme that can remove a variety of covalent adducts from DNA through hydrolysis of a 3'-phosphodiester bond, giving rise to DNA with a free 3' phosphate. Catalyzes the hydrolysis of dead-end complexes between DNA and the topoisomerase I active site tyrosine residue. The protein is Tyrosyl-DNA phosphodiesterase 1 of Arabidopsis thaliana (Mouse-ear cress).